Here is a 399-residue protein sequence, read N- to C-terminus: Myb-related transcription factor, partner of profilin (399 aa).

Residues 12–84 (TTRLRKPRFS…EVQKRWNDFK (73 aa)) form the Myb-like domain. Residues 83-86 (FKRR) carry the Nuclear localization signal motif. Disordered stretches follow at residues 87–108 (TKEK…AEDA), 127–261 (PGAG…PSLD), 297–332 (LLPG…PKVE), and 358–399 (APRS…WKSP). Over residues 127-136 (PGAGAGAEEP) the composition is skewed to low complexity. Residues 137–149 (PAAPSSQPPPPSA) are compositionally biased toward pro residues. A compositionally biased stretch (basic and acidic residues) spans 156–170 (LSEDRREDRRADTSA). 3 stretches are compositionally biased toward pro residues: residues 219–252 (SPPP…PPPT), 305–329 (SLPP…PPAP), and 366–377 (PRPPPAPLPPHD). The segment covering 381-399 (HKRRKGFPTRKRRGRWKSP) has biased composition (basic residues). 2 short sequence motifs (nuclear localization signal) span residues 382–385 (KRRK) and 390–393 (RKRR).

Interacts with PFN1. Homodimer and heterodimer with PFN1.

It is found in the nucleus. Transcriptional repressor; DNA-binding protein that specifically recognizes the core sequence 5'-YAAC[GT]G-3'. Dimerization with PFN1 reduces its DNA-binding capacity. This chain is Myb-related transcription factor, partner of profilin (MYPOP), found in Homo sapiens (Human).